A 248-amino-acid chain; its full sequence is Trypsin I-P38 (248 aa).

A signal peptide spans 1 to 15; that stretch reads MKFLVLVAFLGVAVA. Positions 16-25 are cleaved as a propeptide — activation peptide; the sequence is FPISDEDDDK. A Peptidase S1 domain is found at 26–246; it reads IVGGYSCARS…YVSWIKTTMS (221 aa). Disulfide bonds link C32–C162, C50–C66, C134–C235, C141–C208, C173–C187, and C198–C222. H65 serves as the catalytic Charge relay system. The Ca(2+) site is built by E77, N79, and E87. The active-site Charge relay system is D109. S202 functions as the Charge relay system in the catalytic mechanism.

The protein belongs to the peptidase S1 family. Requires Ca(2+) as cofactor. High levels are seen in the pancreas while lower levels are found in the liver, spleen and thymus.

The protein resides in the secreted. The protein localises to the extracellular space. It carries out the reaction Preferential cleavage: Arg-|-Xaa, Lys-|-Xaa.. This is Trypsin I-P38 from Gallus gallus (Chicken).